The following is a 317-amino-acid chain: Transaldolase A (317 aa).

Catalysis depends on Lys132, which acts as the Schiff-base intermediate with substrate.

This sequence belongs to the transaldolase family. Type 1 subfamily. In terms of assembly, homodimer.

It localises to the cytoplasm. The enzyme catalyses D-sedoheptulose 7-phosphate + D-glyceraldehyde 3-phosphate = D-erythrose 4-phosphate + beta-D-fructose 6-phosphate. It participates in carbohydrate degradation; pentose phosphate pathway; D-glyceraldehyde 3-phosphate and beta-D-fructose 6-phosphate from D-ribose 5-phosphate and D-xylulose 5-phosphate (non-oxidative stage): step 2/3. Its function is as follows. Transaldolase is important for the balance of metabolites in the pentose-phosphate pathway. The sequence is that of Transaldolase A (talA) from Pasteurella multocida (strain Pm70).